Consider the following 294-residue polypeptide: Ribosomal RNA small subunit methyltransferase H (294 aa).

Residues 36–38 (GGH), Asp-55, Phe-82, Asp-97, and Gln-104 each bind S-adenosyl-L-methionine. The segment at 265–285 (KPTVATDDEQNRNPRSRSAKW) is disordered.

It belongs to the methyltransferase superfamily. RsmH family.

The protein resides in the cytoplasm. It catalyses the reaction cytidine(1402) in 16S rRNA + S-adenosyl-L-methionine = N(4)-methylcytidine(1402) in 16S rRNA + S-adenosyl-L-homocysteine + H(+). In terms of biological role, specifically methylates the N4 position of cytidine in position 1402 (C1402) of 16S rRNA. This is Ribosomal RNA small subunit methyltransferase H from Synechococcus sp. (strain CC9902).